We begin with the raw amino-acid sequence, 513 residues long: Zinc finger CCCH-type with G patch domain-containing protein (513 aa).

The C3H1-type zinc-finger motif lies at 155 to 178; sequence PCSYYLEGECRFDEAKCRFSHGAL. Residues 252 to 261 are compositionally biased toward acidic residues; the sequence is DQDEDDELSS. Residues 252 to 283 form a disordered region; sequence DQDEDDELSSEESNSSMNDNSSDEAESDMDDL. Over residues 262-271 the composition is skewed to low complexity; it reads EESNSSMNDN. Over residues 272–283 the composition is skewed to acidic residues; sequence SSDEAESDMDDL. One can recognise a G-patch domain in the interval 312 to 358; that stretch reads TRGIGSKLMEKMGYIHGTGLGSDGRGIVTPVSAQILPQGRSLDACME. Over residues 478–495 the composition is skewed to polar residues; that stretch reads VQMQSHKQELATLQAQER. The tract at residues 478–513 is disordered; sequence VQMQSHKQELATLQAQERSLSKEQQTRKSKNKMFEF. Residues 496 to 513 are compositionally biased toward basic and acidic residues; that stretch reads SLSKEQQTRKSKNKMFEF.

The protein resides in the nucleus. In terms of biological role, transcription repressor. The sequence is that of Zinc finger CCCH-type with G patch domain-containing protein from Drosophila melanogaster (Fruit fly).